A 267-amino-acid chain; its full sequence is Matrilysin (267 aa).

The signal sequence occupies residues 1–20; the sequence is MAAMRLTLFRIVCLLPGCLA. Positions 21–97 are cleaved as a propeptide — activation peptide; it reads LPLSQEAGEV…PRCGVPDVAE (77 aa). The short motif at 88–95 is the Cysteine switch element; the sequence is PRCGVPDV. C90 provides a ligand contact to Zn(2+). D156 contributes to the Ca(2+) binding site. The Zn(2+) site is built by H166 and D168. The Ca(2+) site is built by D173, G174, G176, and T178. H181 serves as a coordination point for Zn(2+). G188, G190, and D192 together coordinate Ca(2+). H194 lines the Zn(2+) pocket. 2 residues coordinate Ca(2+): D196 and E199. H217 lines the Zn(2+) pocket. E218 is an active-site residue. Residues H221 and H227 each coordinate Zn(2+).

It belongs to the peptidase M10A family. It depends on Ca(2+) as a cofactor. The cofactor is Zn(2+).

The protein resides in the secreted. Its subcellular location is the extracellular space. It is found in the extracellular matrix. It carries out the reaction Cleavage of 14-Ala-|-Leu-15 and 16-Tyr-|-Leu-17 in B chain of insulin. No action on collagen types I, II, IV, V. Cleaves gelatin chain alpha2(I) &gt; alpha1(I).. In terms of biological role, degrades casein, gelatins of types I, III, IV, and V, and fibronectin. Activates procollagenase. The protein is Matrilysin (Mmp7) of Rattus norvegicus (Rat).